A 383-amino-acid polypeptide reads, in one-letter code: Putative glutamate--cysteine ligase 2 (383 aa).

The protein belongs to the glutamate--cysteine ligase type 2 family. YbdK subfamily.

The enzyme catalyses L-cysteine + L-glutamate + ATP = gamma-L-glutamyl-L-cysteine + ADP + phosphate + H(+). ATP-dependent carboxylate-amine ligase which exhibits weak glutamate--cysteine ligase activity. The protein is Putative glutamate--cysteine ligase 2 of Legionella pneumophila subsp. pneumophila (strain Philadelphia 1 / ATCC 33152 / DSM 7513).